Reading from the N-terminus, the 427-residue chain is Isocitrate dehydrogenase [NADP] (427 aa).

Position 114 (Thr-114) interacts with NADP(+). Positions 123, 125, 129, 139, and 163 each coordinate D-threo-isocitrate. Asp-317 is a Mg(2+) binding site. Residues 349–355, Asn-362, Tyr-401, and Arg-405 contribute to the NADP(+) site; that span reads HGTAPKY.

The protein belongs to the isocitrate and isopropylmalate dehydrogenases family. As to quaternary structure, homodimer. Requires Mg(2+) as cofactor. The cofactor is Mn(2+).

It carries out the reaction D-threo-isocitrate + NADP(+) = 2-oxoglutarate + CO2 + NADPH. In terms of biological role, catalyzes the oxidative decarboxylation of isocitrate to 2-oxoglutarate and carbon dioxide with the concomitant reduction of NADP(+). The polypeptide is Isocitrate dehydrogenase [NADP] (icd) (Coxiella burnetii (strain RSA 493 / Nine Mile phase I)).